Reading from the N-terminus, the 383-residue chain is Succinyl-diaminopimelate desuccinylase (383 aa).

Histidine 68 lines the Zn(2+) pocket. Aspartate 70 is a catalytic residue. Aspartate 100 provides a ligand contact to Zn(2+). The Proton acceptor role is filled by glutamate 130. Residues glutamate 131, glutamate 159, and histidine 352 each contribute to the Zn(2+) site.

It belongs to the peptidase M20A family. DapE subfamily. Homodimer. Requires Zn(2+) as cofactor. It depends on Co(2+) as a cofactor.

The catalysed reaction is N-succinyl-(2S,6S)-2,6-diaminopimelate + H2O = (2S,6S)-2,6-diaminopimelate + succinate. Its pathway is amino-acid biosynthesis; L-lysine biosynthesis via DAP pathway; LL-2,6-diaminopimelate from (S)-tetrahydrodipicolinate (succinylase route): step 3/3. Catalyzes the hydrolysis of N-succinyl-L,L-diaminopimelic acid (SDAP), forming succinate and LL-2,6-diaminopimelate (DAP), an intermediate involved in the bacterial biosynthesis of lysine and meso-diaminopimelic acid, an essential component of bacterial cell walls. The sequence is that of Succinyl-diaminopimelate desuccinylase from Granulibacter bethesdensis (strain ATCC BAA-1260 / CGDNIH1).